Consider the following 66-residue polypeptide: Large ribosomal subunit protein uL29 (66 aa).

This sequence belongs to the universal ribosomal protein uL29 family.

The chain is Large ribosomal subunit protein uL29 from Thermotoga neapolitana (strain ATCC 49049 / DSM 4359 / NBRC 107923 / NS-E).